Here is a 101-residue protein sequence, read N- to C-terminus: Protein RnfH (101 aa).

Belongs to the UPF0125 (RnfH) family.

This is Protein RnfH from Pseudomonas aeruginosa (strain UCBPP-PA14).